Consider the following 522-residue polypeptide: Target of rapamycin complex 2 subunit MAPKAP1 (522 aa).

N-acetylalanine is present on Ala-2. The interaction with MAP3K2 stretch occupies residues 2–184; that stretch reads AFLDNPTIIL…KKIDVYLPLH (183 aa). Residues 2–267 form an interaction with NBN region; that stretch reads AFLDNPTIIL…GFSTLALVEK (266 aa). Thr-86 is modified (phosphothreonine). Phosphoserine occurs at positions 128, 186, 315, and 356. The CRIM domain occupies 139–267; it reads QSILSVRLEQ…GFSTLALVEK (129 aa). The SIN1-type RBD stretch occupies residues 279 to 353; that stretch reads LFVRINAAHG…QSAWEFCQVR (75 aa). Residues 382–487 enclose the SIN1-type PH domain; the sequence is HYKSFKVSMI…IVLKVNYILE (106 aa). Arg-393 serves as a coordination point for a 1,2-diacyl-sn-glycero-3-phospho-(1D-myo-inositol-3,4,5-trisphosphate). Phosphothreonine is present on Thr-398. A 1,2-diacyl-sn-glycero-3-phospho-(1D-myo-inositol-3,4,5-trisphosphate)-binding residues include Lys-428 and Lys-464. The interval 468-522 is interaction with ATF2; it reads FESDAATVNEIVLKVNYILESRASTARADYFAQKQRKLNRRTSFSFQKEKKSGQQ. Residue Ser-510 is modified to Phosphoserine.

The protein belongs to the SIN1 family. In terms of assembly, component of the mechanistic target of rapamycin complex 2 (mTORC2), consisting in two heterotretramers composed of MTOR, MLST8, RICTOR and MAPKAP1/SIN1. The mTORC2 core complex associates with PRR5/PROTOR1 and/or PRR5L/PROTOR2. Contrary to mTORC1, mTORC2 does not bind to and is not sensitive to FKBP12-rapamycin. Interacts with MAP3K2. Interacts with ATF2. Interacts with MAPK8. Interacts with GTP-bound HRAS and KRAS; inhibiting their activity. Interacts with IFNAR2. In terms of processing, phosphorylation at Ser-128 by PKC promotes relocalization to the perinuclear region, where the mTORC2 complex specifically mediates phosphorylation of SGK1. Phosphorylated at Thr-86 by AKT1 or RPS6KB1 in the presence of growth factors; the effect of this phosphorylation is however unclear. According to two studies, phosphorylation at Thr-86 by AKT1 is part of a positive feedback loop that increases mTORC2 activation. According to another study, phosphorylation at Thr-86 and Thr-398 by RPS6KB1 promotes dissociation from the mTORC2 complex, leading to inhibit mTORC2 signaling.

The protein localises to the cell membrane. It is found in the endoplasmic reticulum membrane. It localises to the early endosome membrane. Its subcellular location is the late endosome membrane. The protein resides in the lysosome membrane. The protein localises to the golgi apparatus membrane. It is found in the mitochondrion outer membrane. It localises to the cytoplasm. Its subcellular location is the perinuclear region. The protein resides in the nucleus. Its activity is regulated as follows. Phosphatidylinositol 3,4,5-trisphosphate (PI(3,4,5)P3) promotes MTOR activation by relieving MAPKAP1/SIN1-mediated inhibition of MTOR that takes place in absence of PI(3,4,5)P3. Its function is as follows. Component of the mechanistic target of rapamycin complex 2 (mTORC2), which transduces signals from growth factors to pathways involved in proliferation, cytoskeletal organization, lipogenesis and anabolic output. In response to growth factors, mTORC2 phosphorylates and activates AGC protein kinase family members, including AKT (AKT1, AKT2 and AKT3), PKC (PRKCA, PRKCB and PRKCE) and SGK1. In contrast to mTORC1, mTORC2 is nutrient-insensitive. Within the mTORC2 complex, MAPKAP1/SIN1 acts as a substrate adapter which recognizes and binds AGC protein kinase family members for phosphorylation by MTOR. mTORC2 plays a critical role in AKT1 activation by mediating phosphorylation of different sites depending on the context, such as 'Thr-450', 'Ser-473', 'Ser-477' or 'Thr-479', facilitating the phosphorylation of the activation loop of AKT1 on 'Thr-308' by PDPK1/PDK1 which is a prerequisite for full activation. mTORC2 catalyzes the phosphorylation of SGK1 at 'Ser-422' and of PRKCA on 'Ser-657'. The mTORC2 complex also phosphorylates various proteins involved in insulin signaling, such as FBXW8 and IGF2BP1. mTORC2 acts upstream of Rho GTPases to regulate the actin cytoskeleton, probably by activating one or more Rho-type guanine nucleotide exchange factors. mTORC2 promotes the serum-induced formation of stress-fibers or F-actin. MAPKAP1 inhibits MAP3K2 by preventing its dimerization and autophosphorylation. Inhibits HRAS and KRAS independently of mTORC2 complex. Enhances osmotic stress-induced phosphorylation of ATF2 and ATF2-mediated transcription. Involved in ciliogenesis, regulates cilia length through its interaction with CCDC28B independently of mTORC2 complex. This chain is Target of rapamycin complex 2 subunit MAPKAP1 (MAPKAP1), found in Pongo abelii (Sumatran orangutan).